We begin with the raw amino-acid sequence, 191 residues long: Holliday junction branch migration complex subunit RuvA (191 aa).

The tract at residues 1–63 (MIRYLRGLVL…EEGLSLYGFP (63 aa)) is domain I. Residues 64–136 (DEENLALFEL…LKGKVPPHLL (73 aa)) form a domain II region. The interval 136–140 (LAGEK) is flexible linker. The tract at residues 141–191 (VESEAAEEAVMALAALGFKEAQARAVVLDLLAQNPKARAQDLIKEALKRLR) is domain III.

Belongs to the RuvA family. In terms of assembly, homotetramer. Forms an RuvA(8)-RuvB(12)-Holliday junction (HJ) complex. HJ DNA is sandwiched between 2 RuvA tetramers; dsDNA enters through RuvA and exits via RuvB. An RuvB hexamer assembles on each DNA strand where it exits the tetramer. Each RuvB hexamer is contacted by two RuvA subunits (via domain III) on 2 adjacent RuvB subunits; this complex drives branch migration. In the full resolvosome a probable DNA-RuvA(4)-RuvB(12)-RuvC(2) complex forms which resolves the HJ.

Its subcellular location is the cytoplasm. The RuvA-RuvB-RuvC complex processes Holliday junction (HJ) DNA during genetic recombination and DNA repair, while the RuvA-RuvB complex plays an important role in the rescue of blocked DNA replication forks via replication fork reversal (RFR). RuvA specifically binds to HJ cruciform DNA, conferring on it an open structure. The RuvB hexamer acts as an ATP-dependent pump, pulling dsDNA into and through the RuvAB complex. HJ branch migration allows RuvC to scan DNA until it finds its consensus sequence, where it cleaves and resolves the cruciform DNA. This is Holliday junction branch migration complex subunit RuvA from Thermus thermophilus (strain ATCC BAA-163 / DSM 7039 / HB27).